A 673-amino-acid chain; its full sequence is UvrABC system protein B (673 aa).

Positions 26–414 (ANFEAGLAKQ…AGEVTELVVR (389 aa)) constitute a Helicase ATP-binding domain. Residue 39 to 46 (GVTGSGKT) coordinates ATP. A Beta-hairpin motif is present at residues 92–115 (YYDYYQPEAYVPSSDTFIEKDSSI). The region spanning 431 to 597 (QVDDLMSEVH…SVERPIADIM (167 aa)) is the Helicase C-terminal domain. 2 stretches are compositionally biased toward basic and acidic residues: residues 600 to 609 (ARDDAAEKKS) and 618 to 628 (HVAEETPDYRA). The interval 600–628 (ARDDAAEKKSGKGRSKSRHVAEETPDYRA) is disordered. One can recognise a UVR domain in the interval 635-670 (AGKLKSLEQKMYQHAKDLEFEAAAQIRDQIQKLKAA).

Belongs to the UvrB family. As to quaternary structure, forms a heterotetramer with UvrA during the search for lesions. Interacts with UvrC in an incision complex.

Its subcellular location is the cytoplasm. In terms of biological role, the UvrABC repair system catalyzes the recognition and processing of DNA lesions. A damage recognition complex composed of 2 UvrA and 2 UvrB subunits scans DNA for abnormalities. Upon binding of the UvrA(2)B(2) complex to a putative damaged site, the DNA wraps around one UvrB monomer. DNA wrap is dependent on ATP binding by UvrB and probably causes local melting of the DNA helix, facilitating insertion of UvrB beta-hairpin between the DNA strands. Then UvrB probes one DNA strand for the presence of a lesion. If a lesion is found the UvrA subunits dissociate and the UvrB-DNA preincision complex is formed. This complex is subsequently bound by UvrC and the second UvrB is released. If no lesion is found, the DNA wraps around the other UvrB subunit that will check the other stand for damage. This is UvrABC system protein B from Xanthomonas axonopodis pv. citri (strain 306).